The following is a 1063-amino-acid chain: Error-prone DNA polymerase (1063 aa).

It belongs to the DNA polymerase type-C family. DnaE2 subfamily.

The protein localises to the cytoplasm. It carries out the reaction DNA(n) + a 2'-deoxyribonucleoside 5'-triphosphate = DNA(n+1) + diphosphate. Its function is as follows. DNA polymerase involved in damage-induced mutagenesis and translesion synthesis (TLS). It is not the major replicative DNA polymerase. This Burkholderia mallei (strain ATCC 23344) protein is Error-prone DNA polymerase.